Here is a 297-residue protein sequence, read N- to C-terminus: N-acetylneuraminate lyase (297 aa).

Aceneuramate is bound by residues Ser-47 and Thr-48. Tyr-137 (proton donor) is an active-site residue. The Schiff-base intermediate with substrate role is filled by Lys-165. The aceneuramate site is built by Thr-167, Gly-189, Asp-191, Glu-192, and Ser-208.

Belongs to the DapA family. NanA subfamily. In terms of assembly, homotetramer.

It localises to the cytoplasm. The enzyme catalyses aceneuramate = aldehydo-N-acetyl-D-mannosamine + pyruvate. The protein operates within amino-sugar metabolism; N-acetylneuraminate degradation; D-fructose 6-phosphate from N-acetylneuraminate: step 1/5. In terms of biological role, catalyzes the reversible aldol cleavage of N-acetylneuraminic acid (sialic acid; Neu5Ac) to form pyruvate and N-acetylmannosamine (ManNAc) via a Schiff base intermediate. This is N-acetylneuraminate lyase from Escherichia fergusonii (strain ATCC 35469 / DSM 13698 / CCUG 18766 / IAM 14443 / JCM 21226 / LMG 7866 / NBRC 102419 / NCTC 12128 / CDC 0568-73).